Consider the following 349-residue polypeptide: Protein RecA (349 aa).

65–72 contributes to the ATP binding site; it reads GPESSGKT.

Belongs to the RecA family.

The protein resides in the cytoplasm. Functionally, can catalyze the hydrolysis of ATP in the presence of single-stranded DNA, the ATP-dependent uptake of single-stranded DNA by duplex DNA, and the ATP-dependent hybridization of homologous single-stranded DNAs. It interacts with LexA causing its activation and leading to its autocatalytic cleavage. This Acinetobacter baumannii (strain AB307-0294) protein is Protein RecA.